A 164-amino-acid polypeptide reads, in one-letter code: V-type proton ATPase subunit c' (164 aa).

Residues 1 to 15 are Lumenal-facing; sequence MTDDLVNEYAPAFAP. The helical transmembrane segment at 16–36 threads the bilayer; it reads FFGFAGCAAAMILSSLGAAIG. The Cytoplasmic portion of the chain corresponds to 37-58; the sequence is TAKSGIGISGIGTFRPELIMKS. The helical transmembrane segment at 59–79 threads the bilayer; the sequence is LIPVVMSGILAVYGLVVAVLV. Residues 80–97 lie on the Lumenal side of the membrane; sequence AGGLSPTEEYTLFNGFMH. A helical transmembrane segment spans residues 98 to 118; that stretch reads LAAGLCVGFACLSSGYAIGIV. Over 119–135 the chain is Cytoplasmic; sequence GDVGVRKFMHQPRLFVG. The helical transmembrane segment at 136–156 threads the bilayer; that stretch reads IVLILIFAEVLGLYGMIIALI. Topologically, residues 157–164 are lumenal; sequence LNTRGSGN.

It belongs to the V-ATPase proteolipid subunit family. In terms of assembly, V-ATPase is a heteromultimeric enzyme composed of a peripheral catalytic V1 complex (components A to H) attached to an integral membrane V0 proton pore complex (components: a, c, c', c'', d, e, f and VOA1). The decameric c-ring forms the proton-conducting pore, and is composed of eight proteolipid subunits c, one subunit c' and one subunit c''.

Its subcellular location is the vacuole membrane. Proton-conducting pore forming subunit of the V0 complex of vacuolar(H+)-ATPase (V-ATPase), a multisubunit enzyme composed of a peripheral complex (V1) that hydrolyzes ATP and a membrane integral complex (V0) that translocates protons. V-ATPase is responsible for acidifying and maintaining the pH of intracellular compartments. The protein is V-type proton ATPase subunit c' (VMA11) of Eremothecium gossypii (strain ATCC 10895 / CBS 109.51 / FGSC 9923 / NRRL Y-1056) (Yeast).